Here is a 201-residue protein sequence, read N- to C-terminus: Large ribosomal subunit protein uL18 (201 aa).

It belongs to the universal ribosomal protein uL18 family. In terms of assembly, part of the 50S ribosomal subunit. Contacts the 5S and 23S rRNAs.

This is one of the proteins that bind and probably mediate the attachment of the 5S RNA into the large ribosomal subunit, where it forms part of the central protuberance. The chain is Large ribosomal subunit protein uL18 from Thermococcus gammatolerans (strain DSM 15229 / JCM 11827 / EJ3).